The chain runs to 998 residues: Ephrin type-B receptor 3 (998 aa).

Residues Met1–Ala33 form the signal peptide. Residues Gly34–Leu559 lie on the Extracellular side of the membrane. One can recognise an Eph LBD domain in the interval Glu39–Ala217. Cys81 and Cys199 form a disulfide bridge. Fibronectin type-III domains are found at residues Val339–Ala451 and Ala452–Glu545. Asn351 and Asn445 each carry an N-linked (GlcNAc...) asparagine glycan. A helical membrane pass occupies residues Ile560–Val580. Residues Cys581–Val998 are Cytoplasmic-facing. Tyr614 bears the Phosphotyrosine; by autocatalysis mark. In terms of domain architecture, Protein kinase spans Val633–Ile896. ATP is bound by residues Ile639 to Val647 and Lys665. Asp758 serves as the catalytic Proton acceptor. The SAM domain occupies Thr925–Gln989. The PDZ-binding motif lies at Val996–Val998.

It belongs to the protein kinase superfamily. Tyr protein kinase family. Ephrin receptor subfamily. In terms of assembly, heterotetramer upon binding of the ligand. The heterotetramer is composed of an ephrin dimer and a receptor dimer. Oligomerization is probably required to induce biological responses. Post-translationally, phosphorylated. Autophosphorylates upon ligand-binding. Autophosphorylation on Tyr-614 is required for interaction with SH2 domain-containing proteins. Ubiquitinated by RNF186, mainly through 'Lys-48' and 'Lys-63'-linked polyubiquitin chains. Ubiquitous.

It localises to the cell membrane. The protein resides in the cell projection. It is found in the dendrite. The enzyme catalyses L-tyrosyl-[protein] + ATP = O-phospho-L-tyrosyl-[protein] + ADP + H(+). Its function is as follows. Receptor tyrosine kinase which binds promiscuously transmembrane ephrin-B family ligands residing on adjacent cells, leading to contact-dependent bidirectional signaling into neighboring cells. The signaling pathway downstream of the receptor is referred to as forward signaling while the signaling pathway downstream of the ephrin ligand is referred to as reverse signaling. Generally has an overlapping and redundant function with EPHB2. Like EPHB2, functions in axon guidance during development regulating for instance the neurons forming the corpus callosum and the anterior commissure, 2 major interhemispheric connections between the temporal lobes of the cerebral cortex. In addition to its role in axon guidance also plays an important redundant role with other ephrin-B receptors in development and maturation of dendritic spines and the formation of excitatory synapses. Controls other aspects of development through regulation of cell migration and positioning. This includes angiogenesis, palate development and thymic epithelium development for instance. Forward and reverse signaling through the EFNB2/EPHB3 complex also regulate migration and adhesion of cells that tubularize the urethra and septate the cloaca. Finally, plays an important role in intestinal epithelium differentiation segregating progenitor from differentiated cells in the crypt. The protein is Ephrin type-B receptor 3 (EPHB3) of Homo sapiens (Human).